A 336-amino-acid polypeptide reads, in one-letter code: Protein REVEILLE 7-like (336 aa).

In terms of domain architecture, HTH myb-type spans 60 to 114 (TVTKQREKWSEEEHDRFLEAIKLYGRGWRQIQEHIGTKTAVQIRSHAQKFFSKMA). The segment at residues 87-110 (WRQIQEHIGTKTAVQIRSHAQKFF) is a DNA-binding region (H-T-H motif). The disordered stretch occupies residues 114-197 (AQEADSRSEG…KQPFKDDSDI (84 aa)). Positions 134-144 (RPKRKPAHPYP) are enriched in basic residues. Pro residues predominate over residues 145 to 158 (RKSPVPYTQSPPPN). Over residues 167 to 189 (KSPTSVLSSFGSEDQNNYTTSKQ) the composition is skewed to polar residues.

It is found in the nucleus. Probable transcription factor. This Arabidopsis thaliana (Mouse-ear cress) protein is Protein REVEILLE 7-like (RVE7L).